Here is a 249-residue protein sequence, read N- to C-terminus: Eukaryotic translation initiation factor 3 subunit K (249 aa).

The PCI domain occupies 46 to 222 (FDCYANLALL…VKVPTNKENE (177 aa)).

The protein belongs to the eIF-3 subunit K family. As to quaternary structure, component of the eukaryotic translation initiation factor 3 (eIF-3) complex.

The protein localises to the cytoplasm. In terms of biological role, component of the eukaryotic translation initiation factor 3 (eIF-3) complex, which is involved in protein synthesis of a specialized repertoire of mRNAs and, together with other initiation factors, stimulates binding of mRNA and methionyl-tRNAi to the 40S ribosome. The eIF-3 complex specifically targets and initiates translation of a subset of mRNAs involved in cell proliferation. This chain is Eukaryotic translation initiation factor 3 subunit K, found in Neosartorya fischeri (strain ATCC 1020 / DSM 3700 / CBS 544.65 / FGSC A1164 / JCM 1740 / NRRL 181 / WB 181) (Aspergillus fischerianus).